The chain runs to 250 residues: Indole-3-glycerol phosphate synthase (250 aa).

The protein belongs to the TrpC family.

The enzyme catalyses 1-(2-carboxyphenylamino)-1-deoxy-D-ribulose 5-phosphate + H(+) = (1S,2R)-1-C-(indol-3-yl)glycerol 3-phosphate + CO2 + H2O. It participates in amino-acid biosynthesis; L-tryptophan biosynthesis; L-tryptophan from chorismate: step 4/5. In Bacillus velezensis (strain DSM 23117 / BGSC 10A6 / LMG 26770 / FZB42) (Bacillus amyloliquefaciens subsp. plantarum), this protein is Indole-3-glycerol phosphate synthase.